Consider the following 341-residue polypeptide: Ribulose-5-phosphate reductase 1 (341 aa).

Zn(2+)-binding residues include cysteine 38, histidine 64, glutamate 65, and glutamate 144.

It belongs to the zinc-containing alcohol dehydrogenase family. In terms of assembly, heterodimer together with TarI. Can also form a dimer of heterodimers. Requires Zn(2+) as cofactor.

The catalysed reaction is D-ribitol 5-phosphate + NADP(+) = D-ribulose 5-phosphate + NADPH + H(+). It participates in cell wall biogenesis; poly(ribitol phosphate) teichoic acid biosynthesis. Catalyzes the NADPH dependent reduction of D-ribulose 5-phosphate to D-ribitol 5-phosphate. This is Ribulose-5-phosphate reductase 1 from Staphylococcus aureus (strain NCTC 8325 / PS 47).